Consider the following 92-residue polypeptide: Small ribosomal subunit protein uS19 (92 aa).

It belongs to the universal ribosomal protein uS19 family.

Functionally, protein S19 forms a complex with S13 that binds strongly to the 16S ribosomal RNA. This is Small ribosomal subunit protein uS19 from Phenylobacterium zucineum (strain HLK1).